The chain runs to 248 residues: 1,2-phenylacetyl-CoA epoxidase, subunit C (248 aa).

Residues 76–79 (QFSN) and 177–179 (IAL) each bind substrate.

In terms of assembly, forms a stable heterotetramer (dimer of heterodimers) with PaaA and a stable heterodimer with PaaB.

The protein operates within aromatic compound metabolism; phenylacetate degradation. Functionally, component of 1,2-phenylacetyl-CoA epoxidase multicomponent enzyme system which catalyzes the reduction of phenylacetyl-CoA (PA-CoA) to form 1,2-epoxyphenylacetyl-CoA. The subunit C may be essential for structural integrity of the alpha subunit. The protein is 1,2-phenylacetyl-CoA epoxidase, subunit C (paaC) of Escherichia coli (strain K12).